An 81-amino-acid polypeptide reads, in one-letter code: Large ribosomal subunit protein bL28 (81 aa).

Belongs to the bacterial ribosomal protein bL28 family.

The chain is Large ribosomal subunit protein bL28 from Gloeobacter violaceus (strain ATCC 29082 / PCC 7421).